The following is a 251-amino-acid chain: Membrane-anchored junction protein (251 aa).

At 1-227 the chain is on the nuclear side; that stretch reads MSLKPFTYPF…HSNPPPLKEP (227 aa). A disordered region spans residues 140–225; that stretch reads RKRKLMEEPS…LEHSNPPPLK (86 aa). Residues 183–198 are compositionally biased toward polar residues; it reads EDSQQDTPASDSTAVT. A helical membrane pass occupies residues 228 to 246; the sequence is AARGFLGFLSALFPFRYFF. The Perinuclear space segment spans residues 247-251; the sequence is RKSTQ.

This sequence belongs to the MAJIN family. Component of the MAJIN-TERB1-TERB2 complex, composed of MAJIN, TERB1 and TERB2.

The protein resides in the nucleus inner membrane. Its subcellular location is the chromosome. The protein localises to the telomere. Functionally, meiosis-specific telomere-associated protein involved in meiotic telomere attachment to the nucleus inner membrane, a crucial step for homologous pairing and synapsis. Component of the MAJIN-TERB1-TERB2 complex, which promotes telomere cap exchange by mediating attachment of telomeric DNA to the inner nuclear membrane and replacement of the protective cap of telomeric chromosomes: in early meiosis, the MAJIN-TERB1-TERB2 complex associates with telomeric DNA and the shelterin/telosome complex. During prophase, the complex matures and promotes release of the shelterin/telosome complex from telomeric DNA. In the complex, MAJIN acts as the anchoring subunit to the nucleus inner membrane. MAJIN shows DNA-binding activity, possibly for the stabilization of telomere attachment on the nucleus inner membrane. This Rattus norvegicus (Rat) protein is Membrane-anchored junction protein.